Reading from the N-terminus, the 804-residue chain is Mechanosensitive cation channel TMEM63A (804 aa).

The Extracellular segment spans residues 1-51; it reads MTSSPFLDPWPSKAVFVRERLGLGERPNDSYCYNSAKNSTVLQGVTFGGIP. A glycan (N-linked (GlcNAc...) asparagine) is linked at N38. A helical transmembrane segment spans residues 52 to 74; it reads TVLLLDVSCFLFLILVFSIIRRR. The Cytoplasmic portion of the chain corresponds to 75 to 133; sequence FWDYGRIALVSEAGSEARFQRLSSSSSGQQDFENELGCCPWLTAIFRLHDDQILEWCGE. The helical transmembrane segment at 134–166 threads the bilayer; it reads DAIHYLSFQRHIIFLLVVISFLSLCVILPVNLS. Topologically, residues 167-190 are extracellular; the sequence is GDLLGKDPYSFGRTTIANLQTDND. Residues 191 to 216 form a helical membrane-spanning segment; sequence LLWLHTVFSVIYLFLTVGFMWHHTRS. At 217-415 the chain is on the cytoplasmic side; that stretch reads IRYKEESLVR…CWKNLSIQGV (199 aa). The interval 218-413 is intracellular linker IL2; confers mechanosensitivity; it reads RYKEESLVRQ…DICWKNLSIQ (196 aa). Residues 416-443 form a helical membrane-spanning segment; that stretch reads RWWLQWLGINFSLFVVLFFLTTPSIIMS. Topologically, residues 444-461 are extracellular; the sequence is TMDKFNVTKPIHALNNPV. An N-linked (GlcNAc...) asparagine glycan is attached at N449. A helical membrane pass occupies residues 462–489; that stretch reads ISQFFPTLLLWSFSALLPSIVYYSTLLE. Residues 490–494 are Cytoplasmic-facing; it reads SHWTR. A helical membrane pass occupies residues 495-531; it reads SGENRIMVSKVYIFLIFMVLILPSLGLTSLDFFFRWL. The Extracellular segment spans residues 532–553; the sequence is FDKTSSETSIRLECVFLPDQGA. Residues 554-585 traverse the membrane as a helical segment; sequence FFVNYVIASAFIGSGMELLRLPGLILYTFRMI. Residues 554–585 are gating helix; the sequence is FFVNYVIASAFIGSGMELLRLPGLILYTFRMI. Residues 586 to 605 lie on the Cytoplasmic side of the membrane; that stretch reads MAKTAADRRNVKQNQAFEYE. A helical transmembrane segment spans residues 606 to 623; it reads FGAMYAWMLCVFTVIMAY. Topologically, residues 624–627 are extracellular; the sequence is SITC. A helical transmembrane segment spans residues 628–650; sequence PIIVPFGLIYILLKHMVDRHNLY. Residues 651 to 660 lie on the Cytoplasmic side of the membrane; sequence FAYLPAKLEK. The helical transmembrane segment at 661–688 threads the bilayer; that stretch reads RIHFAAVNQALAAPILCLFWLFFFSFLR. At 689 to 693 the chain is on the extracellular side; it reads LGLTA. Residues 694 to 708 form a helical membrane-spanning segment; it reads PATLFTFLVVLLTIL. The Cytoplasmic segment spans residues 709-804; the sequence is ACLLYTCFGC…GTAAYAYQES (96 aa). S738 carries the post-translational modification Phosphoserine.

The protein belongs to the CSC1 (TC 1.A.17) family. Monomer. In terms of processing, N-Glycosylated.

The protein localises to the lysosome membrane. It localises to the early endosome membrane. The protein resides in the cell membrane. The catalysed reaction is Ca(2+)(in) = Ca(2+)(out). Mechanosensitive cation channel with low conductance and high activation threshold. In contrast to TMEM63B, does not show phospholipid scramblase activity. Acts as a regulator of lysosomal morphology by mediating lysosomal mechanosensitivity. Important for the baby's first breath and respiration throughout life. Upon lung inflation conducts cation currents in alveolar type 1 and 2 cells triggering lamellar body exocytosis and surfactant secretion into airspace. Also acts as an osmosensitive cation channel preferentially activated by hypotonic stress. This is Mechanosensitive cation channel TMEM63A from Mus musculus (Mouse).